The sequence spans 308 residues: Ribosomal RNA small subunit methyltransferase H (308 aa).

S-adenosyl-L-methionine-binding positions include 35–37 (GGH), aspartate 55, phenylalanine 79, aspartate 100, and glutamine 107.

Belongs to the methyltransferase superfamily. RsmH family.

Its subcellular location is the cytoplasm. It catalyses the reaction cytidine(1402) in 16S rRNA + S-adenosyl-L-methionine = N(4)-methylcytidine(1402) in 16S rRNA + S-adenosyl-L-homocysteine + H(+). Specifically methylates the N4 position of cytidine in position 1402 (C1402) of 16S rRNA. The polypeptide is Ribosomal RNA small subunit methyltransferase H (Dechloromonas aromatica (strain RCB)).